Reading from the N-terminus, the 426-residue chain is Glutamate-1-semialdehyde 2,1-aminomutase (426 aa).

At K265 the chain carries N6-(pyridoxal phosphate)lysine.

It belongs to the class-III pyridoxal-phosphate-dependent aminotransferase family. HemL subfamily. In terms of assembly, homodimer. Requires pyridoxal 5'-phosphate as cofactor.

The protein resides in the cytoplasm. It carries out the reaction (S)-4-amino-5-oxopentanoate = 5-aminolevulinate. It participates in porphyrin-containing compound metabolism; protoporphyrin-IX biosynthesis; 5-aminolevulinate from L-glutamyl-tRNA(Glu): step 2/2. The protein is Glutamate-1-semialdehyde 2,1-aminomutase of Yersinia pestis bv. Antiqua (strain Antiqua).